Here is a 523-residue protein sequence, read N- to C-terminus: Probable endopeptidase p60 (523 aa).

Positions 1 to 27 (MNMKKATIAATAGIAVTAFAAPTIASA) are cleaved as a signal peptide. The region spanning 28–71 (STVVVEAGDTLWGIAQDNGTTVDALKKANKLTTDKIVPGQKLQV) is the LysM 1 domain. The 65-residue stretch at 78-142 (KTEKSVSATW…VNGKYLGNAV (65 aa)) folds into the SH3b domain. Residues 146–188 (PSATPEVKQEETTQAAPAQQTKTEVKQATPAATTEKDAVETKT) form a disordered region. The span at 157–167 (TTQAAPAQQTK) shows a compositional bias: low complexity. The 44-residue stretch at 198 to 241 (TTHTVKSGDTIWALSVKYGASVQDLMSWNNLSSSSIYVGQNIAV) folds into the LysM 2 domain. 2 stretches are compositionally biased toward low complexity: residues 251–282 (PKAE…TTTT) and 290–318 (EKQT…TNAS). 2 disordered regions span residues 251–323 (PKAE…YTVK) and 367–408 (ATNT…SSSA). Positions 318-361 (SSYTVKSGDTLGKIASTFGTTVSKIKALNGLTSDNLQVGDVLKV) constitute a LysM 3 domain. One can recognise a NlpC/P60 domain in the interval 405 to 523 (SSSASAIIAE…GQYLVGFGRV (119 aa)). C435 functions as the Nucleophile in the catalytic mechanism. The Proton acceptor role is filled by H485. Residue N497 is part of the active site.

It belongs to the peptidase C40 family.

Its function is as follows. This major extracellular protein may be involved in the invasion of non-professional phagocytic cells by Listeria. The sequence is that of Probable endopeptidase p60 (iap) from Listeria seeligeri.